We begin with the raw amino-acid sequence, 306 residues long: Peroxisome biogenesis factor 2 (306 aa).

Residues 1–15 lie on the Peroxisomal matrix side of the membrane; it reads MAASENNMEEINPVL. Residues 16-42 traverse the membrane as a helical segment; sequence RISQLDAIELNKALEQLIWSQFSSCFQ. Over 43–48 the chain is Cytoplasmic; that stretch reads GFKPGL. A helical membrane pass occupies residues 49–74; the sequence is LTRFEPEIKASLCLFLWRYTIYTKNA. The Peroxisomal matrix segment spans residues 75-98; the sequence is TVGQTILNMQYKNDLAVTKKYRPL. The chain crosses the membrane as a helical span at residues 99–125; the sequence is NKQQKVWFALFLVGGKWLEERSFDLFS. Over 126–134 the chain is Cytoplasmic; sequence NHPFGASFQ. The helical transmembrane segment at 135 to 161 threads the bilayer; the sequence is RTKYFLNAISGLLKFGALLNFLIFLQQ. Residues 162-188 lie on the Peroxisomal matrix side of the membrane; that stretch reads GKFATLTERLLGIRSVFSRPQDVRQVG. Residues 189 to 212 traverse the membrane as a helical segment; sequence FEYMNREILWHGFAEFLIFLLPLI. The Cytoplasmic segment spans residues 213–306; the sequence is NTQKLKSKLF…KIEISEVHTL (94 aa). Positions 245, 248, 260, 262, 265, 268, 281, and 284 each coordinate Zn(2+). The RING-type zinc finger occupies 245-285; it reads CCLCGEWPAMPHTIGCSHVFCYYCIKSNYMSDMYFTCPKCS.

It belongs to the pex2/pex10/pex12 family. As to quaternary structure, component of the PEX2-PEX10-PEX12 retrotranslocation channel.

The protein resides in the peroxisome membrane. The enzyme catalyses [E2 ubiquitin-conjugating enzyme]-S-ubiquitinyl-L-cysteine + [acceptor protein]-L-cysteine = [E2 ubiquitin-conjugating enzyme]-L-cysteine + [acceptor protein]-S-ubiquitinyl-L-cysteine.. The catalysed reaction is S-ubiquitinyl-[E2 ubiquitin-conjugating enzyme]-L-cysteine + [acceptor protein]-L-lysine = [E2 ubiquitin-conjugating enzyme]-L-cysteine + N(6)-ubiquitinyl-[acceptor protein]-L-lysine.. The protein operates within protein modification; protein ubiquitination. In terms of biological role, E3 ubiquitin-protein ligase component of a retrotranslocation channel required for peroxisome organization by mediating export of the PEX5 receptor from peroxisomes to the cytosol, thereby promoting PEX5 recycling. The retrotranslocation channel is composed of PEX2, PEX10 and PEX12; each subunit contributing transmembrane segments that coassemble into an open channel that specifically allows the passage of PEX5 through the peroxisomal membrane. PEX2 also regulates peroxisome organization by acting as a E3 ubiquitin-protein ligase. This Xenopus laevis (African clawed frog) protein is Peroxisome biogenesis factor 2.